The primary structure comprises 468 residues: 6-phospho-beta-galactosidase (468 aa).

Positions 19, 116, 159, 160, and 297 each coordinate D-galactose 6-phosphate. Glutamate 160 functions as the Proton donor in the catalytic mechanism. Glutamate 375 (nucleophile) is an active-site residue. D-galactose 6-phosphate-binding residues include serine 428, tryptophan 429, lysine 435, and tyrosine 437.

Belongs to the glycosyl hydrolase 1 family.

It catalyses the reaction a 6-phospho-beta-D-galactoside + H2O = D-galactose 6-phosphate + an alcohol. It functions in the pathway carbohydrate metabolism; lactose degradation; D-galactose 6-phosphate and beta-D-glucose from lactose 6-phosphate: step 1/1. The sequence is that of 6-phospho-beta-galactosidase from Streptococcus pyogenes serotype M3 (strain ATCC BAA-595 / MGAS315).